The primary structure comprises 500 residues: L-arabinose isomerase (500 aa).

Mn(2+)-binding residues include Glu306, Glu333, His350, and His450.

This sequence belongs to the arabinose isomerase family. Homohexamer. Requires Mn(2+) as cofactor.

The enzyme catalyses beta-L-arabinopyranose = L-ribulose. The protein operates within carbohydrate degradation; L-arabinose degradation via L-ribulose; D-xylulose 5-phosphate from L-arabinose (bacterial route): step 1/3. In terms of biological role, catalyzes the conversion of L-arabinose to L-ribulose. This chain is L-arabinose isomerase, found in Salmonella newport (strain SL254).